A 428-amino-acid polypeptide reads, in one-letter code: MSKSDQLFEQARQTIPGGVNSPVRAFNGVGGTPRFIDHADGAYLYDVDGQAYVDYIGSWGPMLLGHNHPAIKAAVIKAVEKGLSYGAPTEIEVLMAEKVRQIVPSMEQVRMVNSGTEATMSAIRLARGYTGRDKIVKFEGCYHGHADSLLVKAGSGALTLGQPNSPGVPADFAKHTLTCVFNDLDSVCEAFTQYGSEIACIIVEPVAGNMNCIPPVPGFLEGLRAICDEAGALLILDEVMTGFRVSLRGAQGHYNIDPDLTTLGKIIGAGMPVGAFGGKKKVMQHIAPTGPVYQAGTLSGNPVAMAAGLTMLDLLLEPGLYEQLSAKTARVAEGLKAAAAKHGIPLAINYVGGMFGFFFTDEPEVTRYEQVTRCDMERFKRFYHLMLEEGVYLAPSAYEAGFLSLAHGDKEIEHTLAAAERSFAKLAG.

Position 265 is an N6-(pyridoxal phosphate)lysine (Lys-265).

It belongs to the class-III pyridoxal-phosphate-dependent aminotransferase family. HemL subfamily. In terms of assembly, homodimer. Pyridoxal 5'-phosphate serves as cofactor.

It localises to the cytoplasm. The catalysed reaction is (S)-4-amino-5-oxopentanoate = 5-aminolevulinate. Its pathway is porphyrin-containing compound metabolism; protoporphyrin-IX biosynthesis; 5-aminolevulinate from L-glutamyl-tRNA(Glu): step 2/2. The polypeptide is Glutamate-1-semialdehyde 2,1-aminomutase (Aeromonas hydrophila subsp. hydrophila (strain ATCC 7966 / DSM 30187 / BCRC 13018 / CCUG 14551 / JCM 1027 / KCTC 2358 / NCIMB 9240 / NCTC 8049)).